The sequence spans 344 residues: Anthranilate phosphoribosyltransferase (344 aa).

5-phospho-alpha-D-ribose 1-diphosphate-binding positions include Gly81, 84-85 (GD), Ser89, 91-94 (NIST), 109-117 (KHGNRALSS), and Ala121. Gly81 contributes to the anthranilate binding site. Ser93 serves as a coordination point for Mg(2+). Asn112 lines the anthranilate pocket. Arg167 provides a ligand contact to anthranilate. Residues Asp226 and Glu227 each contribute to the Mg(2+) site.

Belongs to the anthranilate phosphoribosyltransferase family. Homodimer. It depends on Mg(2+) as a cofactor.

The catalysed reaction is N-(5-phospho-beta-D-ribosyl)anthranilate + diphosphate = 5-phospho-alpha-D-ribose 1-diphosphate + anthranilate. It participates in amino-acid biosynthesis; L-tryptophan biosynthesis; L-tryptophan from chorismate: step 2/5. Catalyzes the transfer of the phosphoribosyl group of 5-phosphorylribose-1-pyrophosphate (PRPP) to anthranilate to yield N-(5'-phosphoribosyl)-anthranilate (PRA). In Xanthobacter autotrophicus (strain ATCC BAA-1158 / Py2), this protein is Anthranilate phosphoribosyltransferase.